The sequence spans 90 residues: Movement protein (90 aa).

A helical membrane pass occupies residues 32 to 52 (FVFVTFGLLIAVGVAWLAYTL).

It belongs to the mastrevirus movement protein family. Interacts with the capsid protein (CP). Part of a MP-CP-viral DNA complex.

Its subcellular location is the host membrane. Functionally, involved in the viral transport within, and between cells. In Wheat dwarf virus (isolate Sweden) (WDV), this protein is Movement protein.